The sequence spans 305 residues: MLKQRTIKSIVKTVGIGLHSGRKVELTLRPAAPGTGIVFSRVDLPTPVDIPASAMSIGDTRLASVLQKDGARVSTVEHLMSACAGLGIDNLYVDVTAEEIPIMDGSAASFVFLIQSAGIEEQNAPKRFIKVTKPVEIRDGDKFARLEPYFGFKLKFTIDFRHPAVDKTGQELEVDFANTSYVREIARARTFGFAHEVEMMRELGLARGGSMDNAIVLDEYRILNNDGLRYDDEFVKHKMLDAIGDLYVVGHPLLASYTAYKSGHGLNNALLRELLAHEDAYEIVTFDDPQAAPKGFAFDAQTAFA.

Zn(2+)-binding residues include H78, H237, and D241. H264 acts as the Proton donor in catalysis.

Belongs to the LpxC family. The cofactor is Zn(2+).

It catalyses the reaction a UDP-3-O-[(3R)-3-hydroxyacyl]-N-acetyl-alpha-D-glucosamine + H2O = a UDP-3-O-[(3R)-3-hydroxyacyl]-alpha-D-glucosamine + acetate. Its pathway is glycolipid biosynthesis; lipid IV(A) biosynthesis; lipid IV(A) from (3R)-3-hydroxytetradecanoyl-[acyl-carrier-protein] and UDP-N-acetyl-alpha-D-glucosamine: step 2/6. Functionally, catalyzes the hydrolysis of UDP-3-O-myristoyl-N-acetylglucosamine to form UDP-3-O-myristoylglucosamine and acetate, the committed step in lipid A biosynthesis. The chain is UDP-3-O-acyl-N-acetylglucosamine deacetylase from Burkholderia ambifaria (strain ATCC BAA-244 / DSM 16087 / CCUG 44356 / LMG 19182 / AMMD) (Burkholderia cepacia (strain AMMD)).